The sequence spans 227 residues: ATP-dependent dethiobiotin synthetase BioD (227 aa).

Residue 13–18 coordinates ATP; that stretch reads DIGKTY. Position 17 (Thr17) interacts with Mg(2+). Lys38 is a catalytic residue. Ser42 contacts substrate. ATP contacts are provided by residues Asp55, 116–119, and 179–180; these read EGSG and NN. 2 residues coordinate Mg(2+): Asp55 and Glu116.

The protein belongs to the dethiobiotin synthetase family. In terms of assembly, homodimer. Requires Mg(2+) as cofactor.

Its subcellular location is the cytoplasm. The enzyme catalyses (7R,8S)-7,8-diammoniononanoate + CO2 + ATP = (4R,5S)-dethiobiotin + ADP + phosphate + 3 H(+). It participates in cofactor biosynthesis; biotin biosynthesis; biotin from 7,8-diaminononanoate: step 1/2. Functionally, catalyzes a mechanistically unusual reaction, the ATP-dependent insertion of CO2 between the N7 and N8 nitrogen atoms of 7,8-diaminopelargonic acid (DAPA, also called 7,8-diammoniononanoate) to form a ureido ring. In Clostridium botulinum (strain Okra / Type B1), this protein is ATP-dependent dethiobiotin synthetase BioD.